Reading from the N-terminus, the 458-residue chain is ATP synthase subunit beta 2 (458 aa).

148–155 (GGAGVGKT) lines the ATP pocket.

This sequence belongs to the ATPase alpha/beta chains family. As to quaternary structure, F-type ATPases have 2 components, CF(1) - the catalytic core - and CF(0) - the membrane proton channel. CF(1) has five subunits: alpha(3), beta(3), gamma(1), delta(1), epsilon(1). CF(0) has three main subunits: a(1), b(2) and c(9-12). The alpha and beta chains form an alternating ring which encloses part of the gamma chain. CF(1) is attached to CF(0) by a central stalk formed by the gamma and epsilon chains, while a peripheral stalk is formed by the delta and b chains.

Its subcellular location is the cell inner membrane. The catalysed reaction is ATP + H2O + 4 H(+)(in) = ADP + phosphate + 5 H(+)(out). Functionally, produces ATP from ADP in the presence of a proton gradient across the membrane. The catalytic sites are hosted primarily by the beta subunits. This is ATP synthase subunit beta 2 from Marinomonas sp. (strain MWYL1).